Reading from the N-terminus, the 207-residue chain is Small ribosomal subunit protein uS4c (207 aa).

Positions 92 to 156 (MRLDNILFRL…YQSIITKRIE (65 aa)) constitute an S4 RNA-binding domain.

The protein belongs to the universal ribosomal protein uS4 family. As to quaternary structure, part of the 30S ribosomal subunit. Contacts protein S5. The interaction surface between S4 and S5 is involved in control of translational fidelity.

The protein localises to the plastid. The protein resides in the chloroplast. Functionally, one of the primary rRNA binding proteins, it binds directly to 16S rRNA where it nucleates assembly of the body of the 30S subunit. In terms of biological role, with S5 and S12 plays an important role in translational accuracy. In Equisetum pratense (Meadow horsetail), this protein is Small ribosomal subunit protein uS4c (rps4).